We begin with the raw amino-acid sequence, 381 residues long: Alkanesulfonate monooxygenase (381 aa).

The protein belongs to the SsuD family. As to quaternary structure, homotetramer.

It catalyses the reaction an alkanesulfonate + FMNH2 + O2 = an aldehyde + FMN + sulfite + H2O + 2 H(+). Catalyzes the desulfonation of aliphatic sulfonates. In Enterobacter sp. (strain 638), this protein is Alkanesulfonate monooxygenase.